Here is a 330-residue protein sequence, read N- to C-terminus: Aspartate--ammonia ligase (330 aa).

It belongs to the class-II aminoacyl-tRNA synthetase family. AsnA subfamily.

Its subcellular location is the cytoplasm. The enzyme catalyses L-aspartate + NH4(+) + ATP = L-asparagine + AMP + diphosphate + H(+). The protein operates within amino-acid biosynthesis; L-asparagine biosynthesis; L-asparagine from L-aspartate (ammonia route): step 1/1. The chain is Aspartate--ammonia ligase from Escherichia coli O127:H6 (strain E2348/69 / EPEC).